We begin with the raw amino-acid sequence, 479 residues long: Glycogen synthase (479 aa).

Lys-15 lines the ADP-alpha-D-glucose pocket.

The protein belongs to the glycosyltransferase 1 family. Bacterial/plant glycogen synthase subfamily.

The catalysed reaction is [(1-&gt;4)-alpha-D-glucosyl](n) + ADP-alpha-D-glucose = [(1-&gt;4)-alpha-D-glucosyl](n+1) + ADP + H(+). Its pathway is glycan biosynthesis; glycogen biosynthesis. Its function is as follows. Synthesizes alpha-1,4-glucan chains using ADP-glucose. This Clostridium novyi (strain NT) protein is Glycogen synthase.